Here is a 173-residue protein sequence, read N- to C-terminus: Crossover junction endodeoxyribonuclease RuvC (173 aa).

Residues D8, E67, and D139 contribute to the active site. Residues D8, E67, and D139 each contribute to the Mg(2+) site.

The protein belongs to the RuvC family. In terms of assembly, homodimer which binds Holliday junction (HJ) DNA. The HJ becomes 2-fold symmetrical on binding to RuvC with unstacked arms; it has a different conformation from HJ DNA in complex with RuvA. In the full resolvosome a probable DNA-RuvA(4)-RuvB(12)-RuvC(2) complex forms which resolves the HJ. Mg(2+) serves as cofactor.

The protein localises to the cytoplasm. It carries out the reaction Endonucleolytic cleavage at a junction such as a reciprocal single-stranded crossover between two homologous DNA duplexes (Holliday junction).. The RuvA-RuvB-RuvC complex processes Holliday junction (HJ) DNA during genetic recombination and DNA repair. Endonuclease that resolves HJ intermediates. Cleaves cruciform DNA by making single-stranded nicks across the HJ at symmetrical positions within the homologous arms, yielding a 5'-phosphate and a 3'-hydroxyl group; requires a central core of homology in the junction. The consensus cleavage sequence is 5'-(A/T)TT(C/G)-3'. Cleavage occurs on the 3'-side of the TT dinucleotide at the point of strand exchange. HJ branch migration catalyzed by RuvA-RuvB allows RuvC to scan DNA until it finds its consensus sequence, where it cleaves and resolves the cruciform DNA. This chain is Crossover junction endodeoxyribonuclease RuvC, found in Photobacterium profundum (strain SS9).